A 196-amino-acid chain; its full sequence is Large ribosomal subunit protein eL15 (196 aa).

The segment at 156-196 is disordered; it reads HRGRAERGKTSAGRKGRGMRTRGRGTEKTRPSIRSHANQGK. Positions 167-178 are enriched in basic residues; that stretch reads AGRKGRGMRTRG.

The protein belongs to the eukaryotic ribosomal protein eL15 family.

This chain is Large ribosomal subunit protein eL15, found in Methanoregula boonei (strain DSM 21154 / JCM 14090 / 6A8).